The primary structure comprises 445 residues: METRTEDGGLTRRPTLASSWDVAGGALTHSLLLTRAGLGPGDFDWEELLAPPAPGQDLVILKRNHNNKDENPCFLYLRCGPDGGEEIASIGILSSARNMEVYLGEEYCGTSRGKNVCTVLDDSEHEKIILYKKNLKLESSTHACKIKLLSFGERQCVFISKVVVHMRSVFANSSTSSPALGSRIDLDKVQTIMESMGSKLSPGAQQLMDMVRCQQRNCIPIGEQLQSVLGNSGYKHMIGLQSSSTLGTLNKSSSTPFPFRTGLTSGNVTENLQTYIDKSTQLPGGENSTKLDECKVMPQNHSFLENDLKNAMASFLPKKVSDNSNIPNSELLPFLQNLCSQVNHLHVGNKTECQENITKHGERILGVGMEEQSICSYLEKILSKNMELMEKKLMDYIDQRIHELQEHIDDKIALLLDLLQNPNSPPTGIPLRHYDSGERLSNGER.

Residues S177, S182, S254, and S302 each carry the phosphoserine modification. Positions 426–445 (PTGIPLRHYDSGERLSNGER) are disordered. Basic and acidic residues predominate over residues 432–445 (RHYDSGERLSNGER).

As to quaternary structure, homodimer. Interacts with ABCB7, ABCB8/MITOSUR and ABCB10.

Its subcellular location is the cytoplasm. It is found in the mitochondrion. The catalysed reaction is ATP + H2O = ADP + phosphate + H(+). In terms of biological role, ATPase that regulates mitochondrial ABC transporters ABCB7, ABCB8/MITOSUR and ABCB10. Regulates mitochondrial ferric concentration and heme biosynthesis and plays a role in the maintenance of mitochondrial homeostasis and cell survival. The protein is ATPase PAAT of Homo sapiens (Human).